A 665-amino-acid chain; its full sequence is Glycine--tRNA ligase beta subunit (665 aa).

It belongs to the class-II aminoacyl-tRNA synthetase family. As to quaternary structure, tetramer of two alpha and two beta subunits.

The protein localises to the cytoplasm. The enzyme catalyses tRNA(Gly) + glycine + ATP = glycyl-tRNA(Gly) + AMP + diphosphate. In Rickettsia prowazekii (strain Madrid E), this protein is Glycine--tRNA ligase beta subunit (glyS).